Consider the following 1384-residue polypeptide: Contactin-associated protein 1 (1384 aa).

The N-terminal stretch at 1 to 19 (MMHLRLFCILLAAVSGAEG) is a signal peptide. Residues 20 to 1283 (WGYYGCDEEL…PYYHDEGWVA (1264 aa)) lie on the Extracellular side of the membrane. The F5/8 type C domain maps to 25 to 168 (CDEELVGPLY…IGLRLGLYGC (144 aa)). A disulfide bridge links Cys25 with Cys168. N-linked (GlcNAc...) asparagine glycosylation is found at Asn120, Asn128, and Asn276. Laminin G-like domains follow at residues 203 to 355 (FKTE…AFRC) and 389 to 538 (FRTW…FDTC). Cys323 and Cys355 are joined by a disulfide. N-linked (GlcNAc...) asparagine glycans are attached at residues Asn420, Asn499, and Asn518. 4 disulfide bridges follow: Cys506/Cys538, Cys544/Cys555, Cys549/Cys564, and Cys566/Cys576. Residues 540–577 (ITDRCSPNMCEHDGRCYQSWDDFICYCELTGYKGETCH) form the EGF-like 1 domain. Positions 576–795 (CHTPLYKESC…NTISFHTGAA (220 aa)) constitute a Fibrinogen C-terminal domain. 9 N-linked (GlcNAc...) asparagine glycosylation sites follow: Asn597, Asn653, Asn664, Asn763, Asn804, Asn843, Asn860, Asn948, and Asn956. The Laminin G-like 3 domain maps to 813–956 (FRTSAPSGVF…ANASEGTSPN (144 aa)). Intrachain disulfides connect Cys930-Cys957, Cys961-Cys974, Cys968-Cys983, and Cys985-Cys995. The EGF-like 2 domain maps to 957–996 (CTGHCAHPRLPCFHGGRCVERYSYYTCDCDLTAFDGPYCN). Asn1078 and Asn1147 each carry an N-linked (GlcNAc...) asparagine glycan. Residues 1088–1250 (FSTSSAPAVL…VQGELSESNC (163 aa)) form the Laminin G-like 4 domain. The cysteines at positions 1209 and 1250 are disulfide-linked. A helical membrane pass occupies residues 1284-1304 (ILLGFLVAFLLLGLVGMLVLF). At 1305 to 1384 (YLQNHRYKGS…PQILEESRSE (80 aa)) the chain is on the cytoplasmic side. The segment covering 1319 to 1328 (EPKAAHEYHP) has biased composition (basic and acidic residues). Residues 1319-1384 (EPKAAHEYHP…PQILEESRSE (66 aa)) are disordered. The SH3-binding motif lies at 1328 to 1369 (PGSKPPLPTSGPAQVPTPTAAPNQAPASAPAPAPTPAPAPGP). The span at 1339-1355 (PAQVPTPTAAPNQAPAS) shows a compositional bias: low complexity. Pro residues predominate over residues 1356 to 1368 (APAPAPTPAPAPG). Position 1383 is a phosphoserine (Ser1383).

The protein belongs to the neurexin family. As to quaternary structure, interacts with CNTN1/contactin in cis form. In terms of tissue distribution, predominantly expressed in brain. Weak expression detected in ovary, pancreas, colon, lung, heart, intestine and testis.

It is found in the membrane. It localises to the cell junction. The protein localises to the paranodal septate junction. In terms of biological role, required, with CNTNAP2, for radial and longitudinal organization of myelinated axons. Plays a role in the formation of functional distinct domains critical for saltatory conduction of nerve impulses in myelinated nerve fibers. Demarcates the paranodal region of the axo-glial junction. In association with contactin involved in the signaling between axons and myelinating glial cells. In Homo sapiens (Human), this protein is Contactin-associated protein 1 (CNTNAP1).